Here is a 162-residue protein sequence, read N- to C-terminus: uncharacterized protein (162 aa).

This is an uncharacterized protein from Acidianus sp. F28 (AFV-2).